A 318-amino-acid chain; its full sequence is Taste receptor type 2 member 60 (318 aa).

At 1–7 the chain is on the extracellular side; that stretch reads MNGDHMV. Residues 8–28 traverse the membrane as a helical segment; that stretch reads LGSSVTDQKAIILVIILLLLC. The Cytoplasmic segment spans residues 29-40; sequence LVAIAGNGFITA. A helical transmembrane segment spans residues 41–61; sequence ALGVEWVLRGTLLPCDKLLVS. The Extracellular portion of the chain corresponds to 62–88; it reads LRASRFCLQWVVMGKTIYVLLYPTAFP. The helical transmembrane segment at 89 to 109 threads the bilayer; the sequence is YNPVLQFLAFQWDFLNAATLW. The Cytoplasmic portion of the chain corresponds to 110–128; it reads FSSWLSVFYCVKIATFTHP. The helical transmembrane segment at 129-149 threads the bilayer; it reads VFLWLKHKLSEWVPWMFFSSV. The Extracellular portion of the chain corresponds to 150–183; the sequence is GLSSFTTILFFIGNHSIYQNYLRNHLQPWNVTGN. 2 N-linked (GlcNAc...) asparagine glycosylation sites follow: Asn163 and Asn179. Residues 184-204 form a helical membrane-spanning segment; the sequence is SIWSYCEKFYLFPVKMITWTM. Over 205–234 the chain is Cytoplasmic; sequence PTAVFFICMILLITSLGRHMEKALLTTSGF. A helical transmembrane segment spans residues 235–255; sequence REPSVQAHVKALLALLSLAML. The Extracellular portion of the chain corresponds to 256–264; that stretch reads FISYFLSLV. Residues 265 to 285 form a helical membrane-spanning segment; the sequence is LSAAGIFPPLDFKFWVGESVI. The Cytoplasmic segment spans residues 286 to 318; that stretch reads YLCAGVHPIILLFSNRRLRAVLERCRSSRCRTP.

This sequence belongs to the G-protein coupled receptor T2R family.

The protein localises to the membrane. Its function is as follows. Receptor that may play a role in the perception of bitterness and is gustducin-linked. May play a role in sensing the chemical composition of the gastrointestinal content. The activity of this receptor may stimulate alpha gustducin, mediate PLC-beta-2 activation and lead to the gating of TRPM5. The polypeptide is Taste receptor type 2 member 60 (TAS2R60) (Macaca mulatta (Rhesus macaque)).